The sequence spans 701 residues: Elongation factor G (701 aa).

In terms of domain architecture, tr-type G spans 8–291 (GRYRNIGIVA…AVIDYLPAPT (284 aa)). Residues 17-24 (AHVDAGKT), 89-93 (DTPGH), and 143-146 (NKMD) contribute to the GTP site.

This sequence belongs to the TRAFAC class translation factor GTPase superfamily. Classic translation factor GTPase family. EF-G/EF-2 subfamily.

The protein localises to the cytoplasm. Its function is as follows. Catalyzes the GTP-dependent ribosomal translocation step during translation elongation. During this step, the ribosome changes from the pre-translocational (PRE) to the post-translocational (POST) state as the newly formed A-site-bound peptidyl-tRNA and P-site-bound deacylated tRNA move to the P and E sites, respectively. Catalyzes the coordinated movement of the two tRNA molecules, the mRNA and conformational changes in the ribosome. The chain is Elongation factor G from Pseudomonas savastanoi pv. phaseolicola (strain 1448A / Race 6) (Pseudomonas syringae pv. phaseolicola (strain 1448A / Race 6)).